The following is a 490-amino-acid chain: UDP-glycosyltransferase 86A1 (490 aa).

UDP-alpha-D-glucose is bound by residues Ser-294, 352 to 354 (CCQ), 369 to 377 (HCGWNSILE), and 391 to 394 (LTDQ).

This sequence belongs to the UDP-glycosyltransferase family.

The chain is UDP-glycosyltransferase 86A1 (UGT86A1) from Arabidopsis thaliana (Mouse-ear cress).